Here is a 308-residue protein sequence, read N- to C-terminus: Energy-coupling factor transporter ATP-binding protein EcfA2 (308 aa).

Residues 3–263 (IEVKNISKVF…VDFLRENEME (261 aa)) enclose the ABC transporter domain. 40–47 (GPTGSGKT) provides a ligand contact to ATP.

It belongs to the ABC transporter superfamily. Energy-coupling factor EcfA family. In terms of assembly, forms a stable energy-coupling factor (ECF) transporter complex composed of 2 membrane-embedded substrate-binding proteins (S component), 2 ATP-binding proteins (A component) and 2 transmembrane proteins (T component).

The protein resides in the cell membrane. In terms of biological role, ATP-binding (A) component of a common energy-coupling factor (ECF) ABC-transporter complex. Unlike classic ABC transporters this ECF transporter provides the energy necessary to transport a number of different substrates. The polypeptide is Energy-coupling factor transporter ATP-binding protein EcfA2 (Mycoplasma mobile (strain ATCC 43663 / 163K / NCTC 11711) (Mesomycoplasma mobile)).